Here is a 293-residue protein sequence, read N- to C-terminus: Elongation factor Ts (293 aa).

The interval 81–84 is involved in Mg(2+) ion dislocation from EF-Tu; the sequence is TDFV.

Belongs to the EF-Ts family.

It localises to the cytoplasm. Functionally, associates with the EF-Tu.GDP complex and induces the exchange of GDP to GTP. It remains bound to the aminoacyl-tRNA.EF-Tu.GTP complex up to the GTP hydrolysis stage on the ribosome. In Methylococcus capsulatus (strain ATCC 33009 / NCIMB 11132 / Bath), this protein is Elongation factor Ts.